Reading from the N-terminus, the 762-residue chain is Multifunctional tryptophan biosynthesis protein (762 aa).

A Glutamine amidotransferase type-1 domain is found at 25–224 (NLILIDNYDS…LHMQGGTWAE (200 aa)). Residue 76–78 (GPG) coordinates L-glutamine. Catalysis depends on Cys104, which acts as the Nucleophile; for GATase activity. L-glutamine-binding positions include Gln108 and 154–155 (SL). Catalysis depends on for GATase activity residues His198 and Glu200. The indole-3-glycerol phosphate synthase stretch occupies residues 251–515 (ILQKIYAHRK…DATQFIRELC (265 aa)). The interval 531-762 (LVKICGTRSA…EFVKAAKSVR (232 aa)) is N-(5'-phosphoribosyl)anthranilate isomerase.

As to quaternary structure, tetramer of two components I and two components II.

The enzyme catalyses chorismate + L-glutamine = anthranilate + pyruvate + L-glutamate + H(+). It carries out the reaction N-(5-phospho-beta-D-ribosyl)anthranilate = 1-(2-carboxyphenylamino)-1-deoxy-D-ribulose 5-phosphate. The catalysed reaction is 1-(2-carboxyphenylamino)-1-deoxy-D-ribulose 5-phosphate + H(+) = (1S,2R)-1-C-(indol-3-yl)glycerol 3-phosphate + CO2 + H2O. The protein operates within amino-acid biosynthesis; L-tryptophan biosynthesis; L-tryptophan from chorismate: step 1/5. It participates in amino-acid biosynthesis; L-tryptophan biosynthesis; L-tryptophan from chorismate: step 3/5. Its pathway is amino-acid biosynthesis; L-tryptophan biosynthesis; L-tryptophan from chorismate: step 4/5. Functionally, trifunctional enzyme bearing the Gln amidotransferase (GATase) domain of anthranilate synthase, indole-glycerolphosphate synthase, and phosphoribosylanthranilate isomerase activities. The protein is Multifunctional tryptophan biosynthesis protein (trp-1) of Neurospora crassa (strain ATCC 24698 / 74-OR23-1A / CBS 708.71 / DSM 1257 / FGSC 987).